The chain runs to 557 residues: Formate--tetrahydrofolate ligase (557 aa).

44 to 51 is an ATP binding site; the sequence is TPLGEGKS.

The protein belongs to the formate--tetrahydrofolate ligase family.

It carries out the reaction (6S)-5,6,7,8-tetrahydrofolate + formate + ATP = (6R)-10-formyltetrahydrofolate + ADP + phosphate. The protein operates within one-carbon metabolism; tetrahydrofolate interconversion. The polypeptide is Formate--tetrahydrofolate ligase (Desulfotalea psychrophila (strain LSv54 / DSM 12343)).